We begin with the raw amino-acid sequence, 291 residues long: Putative transport permease ycf38 (291 aa).

The next 6 helical transmembrane spans lie at 47-67, 87-107, 135-155, 165-185, 195-215, and 262-282; these read ATLMAGIIQPLLWLILFGGLF, SGIIIFTSFTGALNSGLPLMF, FMTCISLIQVVFIVTASLFMG, MIFGLMILLVTVGVTMLSLAL, LLAFILVVNLPFLFSSTALAP, and ICLGQIIILLIALDIMAAYLV. Residues 47–289 form the ABC transmembrane type-2 domain; sequence ATLMAGIIQP…YLVSNILKAK (243 aa).

The protein belongs to the ABC-2 integral membrane protein family.

Its subcellular location is the plastid. The protein localises to the chloroplast membrane. The chain is Putative transport permease ycf38 (ycf38) from Pyropia yezoensis (Susabi-nori).